The following is a 590-amino-acid chain: Cytidine monophosphate-N-acetylneuraminic acid hydroxylase (590 aa).

The 99-residue stretch at Leu-14–Leu-112 folds into the Rieske domain. [2Fe-2S] cluster is bound by residues Cys-54, His-56, Cys-75, and His-78.

Belongs to the CMP-Neu5Ac hydroxylase family. Requires [2Fe-2S] cluster as cofactor.

The protein localises to the cytoplasm. It carries out the reaction CMP-N-acetyl-beta-neuraminate + 2 Fe(II)-[cytochrome b5] + O2 + 2 H(+) = CMP-N-glycoloyl-beta-neuraminate + 2 Fe(III)-[cytochrome b5] + H2O. It functions in the pathway amino-sugar metabolism; N-acetylneuraminate metabolism. Sialic acids are components of carbohydrate chains of glycoconjugates and are involved in cell-cell recognition and cell-pathogen interactions. Catalyzes the conversion of CMP-N-acetylneuraminic acid (CMP-Neu5Ac) into its hydroxylated derivative CMP-N-glycolylneuraminic acid (CMP-Neu5Gc), a sialic acid abundantly expressed at the surface of many cells. The sequence is that of Cytidine monophosphate-N-acetylneuraminic acid hydroxylase from Pan troglodytes (Chimpanzee).